The primary structure comprises 191 residues: Ribosome maturation factor RimM (191 aa).

The PRC barrel domain occupies 99-172 (TDEFYQIDLI…FLVVDPVAAG (74 aa)).

The protein belongs to the RimM family. In terms of assembly, binds ribosomal protein uS19.

It is found in the cytoplasm. Its function is as follows. An accessory protein needed during the final step in the assembly of 30S ribosomal subunit, possibly for assembly of the head region. Essential for efficient processing of 16S rRNA. May be needed both before and after RbfA during the maturation of 16S rRNA. It has affinity for free ribosomal 30S subunits but not for 70S ribosomes. The polypeptide is Ribosome maturation factor RimM (Bartonella bacilliformis (strain ATCC 35685 / KC583 / Herrer 020/F12,63)).